The following is a 484-amino-acid chain: Probable cobyric acid synthase (484 aa).

The GATase cobBQ-type domain occupies 247 to 433; that stretch reads ELHIQIVKLP…LHGIFHNFAF (187 aa). Cys325 acts as the Nucleophile in catalysis. Residue His425 is part of the active site.

Belongs to the CobB/CobQ family. CobQ subfamily.

The protein operates within cofactor biosynthesis; adenosylcobalamin biosynthesis. In terms of biological role, catalyzes amidations at positions B, D, E, and G on adenosylcobyrinic A,C-diamide. NH(2) groups are provided by glutamine, and one molecule of ATP is hydrogenolyzed for each amidation. In Thermococcus onnurineus (strain NA1), this protein is Probable cobyric acid synthase.